Here is a 152-residue protein sequence, read N- to C-terminus: SsrA-binding protein (152 aa).

The segment covering 132–142 has biased composition (basic and acidic residues); the sequence is REAIKKRDVSD. A disordered region spans residues 132–152; that stretch reads REAIKKRDVSDQIRSSLRRSR.

This sequence belongs to the SmpB family.

It is found in the cytoplasm. Required for rescue of stalled ribosomes mediated by trans-translation. Binds to transfer-messenger RNA (tmRNA), required for stable association of tmRNA with ribosomes. tmRNA and SmpB together mimic tRNA shape, replacing the anticodon stem-loop with SmpB. tmRNA is encoded by the ssrA gene; the 2 termini fold to resemble tRNA(Ala) and it encodes a 'tag peptide', a short internal open reading frame. During trans-translation Ala-aminoacylated tmRNA acts like a tRNA, entering the A-site of stalled ribosomes, displacing the stalled mRNA. The ribosome then switches to translate the ORF on the tmRNA; the nascent peptide is terminated with the 'tag peptide' encoded by the tmRNA and targeted for degradation. The ribosome is freed to recommence translation, which seems to be the essential function of trans-translation. The chain is SsrA-binding protein from Bdellovibrio bacteriovorus (strain ATCC 15356 / DSM 50701 / NCIMB 9529 / HD100).